A 113-amino-acid polypeptide reads, in one-letter code: Ig heavy chain V region 36-60 (113 aa).

This is Ig heavy chain V region 36-60 from Mus musculus (Mouse).